Consider the following 291-residue polypeptide: Probable S-adenosylmethionine-dependent methyltransferase CRG1 (291 aa).

Belongs to the methyltransferase superfamily.

The protein localises to the cytoplasm. Its function is as follows. Probable S-adenosylmethionine-dependent methyltransferase which mediates cantharidin resistance. This is Probable S-adenosylmethionine-dependent methyltransferase CRG1 (CRG1) from Saccharomyces cerevisiae (strain ATCC 204508 / S288c) (Baker's yeast).